A 212-amino-acid chain; its full sequence is MKLNKKGLLIVLSGPSGVGKATVRKALFEMTNHNFVYSVSATTRKPRPGEQDGKDYHFLTKEEFEKGIENNCFLEWAKFIDHYYGTPKKQIQDFLKQGKEVFLEIEVEGATHLRKKRIPNTVFIFLVPPEKKALYDRLKKRGTEQEANIAKRIAKANNEFHLAHKYDYIVVNDEVANAADRIIAIIRAEHAKTKRSIRNYLKILEDNGYAEQ.

The Guanylate kinase-like domain maps to glycine 7–arginine 187. Glycine 14 to alanine 21 is a binding site for ATP.

The protein belongs to the guanylate kinase family.

The protein resides in the cytoplasm. It catalyses the reaction GMP + ATP = GDP + ADP. Functionally, essential for recycling GMP and indirectly, cGMP. This is Guanylate kinase from Onion yellows phytoplasma (strain OY-M).